Here is a 188-residue protein sequence, read N- to C-terminus: UPF0314 protein Sala_3154 (188 aa).

A run of 3 helical transmembrane segments spans residues 8-28 (TGWL…IFMG), 57-77 (WYSF…RWIM), and 143-163 (MRWW…LWTI).

It belongs to the UPF0314 family.

It is found in the cell membrane. The chain is UPF0314 protein Sala_3154 from Sphingopyxis alaskensis (strain DSM 13593 / LMG 18877 / RB2256) (Sphingomonas alaskensis).